Reading from the N-terminus, the 385-residue chain is Multidrug resistance protein MdtE (385 aa).

The first 20 residues, 1-20 (MNRRRKLLIPLLFCGAMLTA), serve as a signal peptide directing secretion. Residue Cys-21 is the site of N-palmitoyl cysteine attachment. Cys-21 carries the S-diacylglycerol cysteine lipid modification.

The protein belongs to the membrane fusion protein (MFP) (TC 8.A.1) family. In terms of assembly, homotrimer. Part of the tripartite efflux system MdtEF-TolC, which is composed of an inner membrane transporter, MdtF, a membrane fusion protein, MdtE, and an outer membrane component, TolC. The complex forms a large protein conduit and can translocate molecules across both the inner and outer membranes.

It is found in the cell inner membrane. Functionally, part of the tripartite efflux system MdtEF-TolC, which confers resistance to various compounds. The sequence is that of Multidrug resistance protein MdtE (mdtE) from Escherichia coli O6:H1 (strain CFT073 / ATCC 700928 / UPEC).